Consider the following 321-residue polypeptide: Lipoyl synthase (321 aa).

Positions 68, 73, 79, 94, 98, 101, and 308 each coordinate [4Fe-4S] cluster. The Radical SAM core domain occupies 80–297 (FNHGTATFMI…KAEAMAMGFT (218 aa)).

Belongs to the radical SAM superfamily. Lipoyl synthase family. It depends on [4Fe-4S] cluster as a cofactor.

It is found in the cytoplasm. The enzyme catalyses [[Fe-S] cluster scaffold protein carrying a second [4Fe-4S](2+) cluster] + N(6)-octanoyl-L-lysyl-[protein] + 2 oxidized [2Fe-2S]-[ferredoxin] + 2 S-adenosyl-L-methionine + 4 H(+) = [[Fe-S] cluster scaffold protein] + N(6)-[(R)-dihydrolipoyl]-L-lysyl-[protein] + 4 Fe(3+) + 2 hydrogen sulfide + 2 5'-deoxyadenosine + 2 L-methionine + 2 reduced [2Fe-2S]-[ferredoxin]. Its pathway is protein modification; protein lipoylation via endogenous pathway; protein N(6)-(lipoyl)lysine from octanoyl-[acyl-carrier-protein]: step 2/2. Its function is as follows. Catalyzes the radical-mediated insertion of two sulfur atoms into the C-6 and C-8 positions of the octanoyl moiety bound to the lipoyl domains of lipoate-dependent enzymes, thereby converting the octanoylated domains into lipoylated derivatives. This chain is Lipoyl synthase, found in Yersinia enterocolitica serotype O:8 / biotype 1B (strain NCTC 13174 / 8081).